Consider the following 97-residue polypeptide: NADH-ubiquinone oxidoreductase chain 4L (97 aa).

3 helical membrane-spanning segments follow: residues Met1–Cys21, Leu28–Phe48, and Phe57–Leu77.

The protein belongs to the complex I subunit 4L family.

It is found in the mitochondrion membrane. The catalysed reaction is a ubiquinone + NADH + 5 H(+)(in) = a ubiquinol + NAD(+) + 4 H(+)(out). Its function is as follows. Core subunit of the mitochondrial membrane respiratory chain NADH dehydrogenase (Complex I) that is believed to belong to the minimal assembly required for catalysis. Complex I functions in the transfer of electrons from NADH to the respiratory chain. The immediate electron acceptor for the enzyme is believed to be ubiquinone. In Locusta migratoria (Migratory locust), this protein is NADH-ubiquinone oxidoreductase chain 4L (ND4L).